The sequence spans 337 residues: tRNA N6-adenosine threonylcarbamoyltransferase (337 aa).

2 residues coordinate Fe cation: His111 and His115. Residues 134-138 (LVSGG), Asp167, Gly180, and Asn272 each bind substrate. Asp300 provides a ligand contact to Fe cation.

This sequence belongs to the KAE1 / TsaD family. Fe(2+) serves as cofactor.

It localises to the cytoplasm. It catalyses the reaction L-threonylcarbamoyladenylate + adenosine(37) in tRNA = N(6)-L-threonylcarbamoyladenosine(37) in tRNA + AMP + H(+). Its function is as follows. Required for the formation of a threonylcarbamoyl group on adenosine at position 37 (t(6)A37) in tRNAs that read codons beginning with adenine. Is involved in the transfer of the threonylcarbamoyl moiety of threonylcarbamoyl-AMP (TC-AMP) to the N6 group of A37, together with TsaE and TsaB. TsaD likely plays a direct catalytic role in this reaction. The sequence is that of tRNA N6-adenosine threonylcarbamoyltransferase from Shewanella woodyi (strain ATCC 51908 / MS32).